Reading from the N-terminus, the 1019-residue chain is Protein HIRA (1019 aa).

WD repeat units follow at residues 11–53, 68–107, 129–168, 172–211, 220–263, 266–322, and 326–367; these read HNGK…KEED, NHLA…GPST, SHSG…EILA, GHSG…LETS, GGTT…TNMD, GHRK…PLVV, and LFDK…DPLS. An interaction with RBBP4 region spans residues 23–443; sequence PDGTKFATGG…ASMVNGESLE (421 aa). 2 stretches are compositionally biased toward low complexity: residues 406-415 and 544-561; these read QRQQQQQAEQ and ATSV…VLTT. Disordered regions lie at residues 406–433, 513–561, and 599–633; these read QRQQ…APKV, ANSL…VLTT, and LKDQ…LSAP. An interaction with HDAC1 region spans residues 444 to 1019; it reads DIRKNLLKKQ…TEYQEQLDIL (576 aa). The span at 599-625 shows a compositional bias: basic and acidic residues; that stretch reads LKDQNLIKDNKPKDILESSSDSEEKIP. The segment at 960–1019 is interaction with HDAC2; that stretch reads RLRELCKDLLGPVHYSRGSQWESTVMGLRKRELLKELLPVIGQNLFQRLFTEYQEQLDIL.

This sequence belongs to the WD repeat HIR1 family. Interacts with ASF1, HDAC1, HDAC2 and RBBP4.

It is found in the nucleus. Its function is as follows. Cooperates with ASF1A to promote replication-independent chromatin assembly. May regulate the transcription of a variety of genes controlling cell growth. In Gallus gallus (Chicken), this protein is Protein HIRA (HIRA).